The chain runs to 258 residues: Elongation factor Ts (258 aa).

Positions 81–84 (TDFV) are involved in Mg(2+) ion dislocation from EF-Tu. The interval 216–258 (GLKPAEAPKVEETPPAPPEEPAPEPAPAAESKPAKKGSAKKKK) is disordered. The segment covering 229–241 (PPAPPEEPAPEPA) has biased composition (pro residues). The segment covering 249 to 258 (AKKGSAKKKK) has biased composition (basic residues).

The protein belongs to the EF-Ts family.

The protein resides in the cytoplasm. Its function is as follows. Associates with the EF-Tu.GDP complex and induces the exchange of GDP to GTP. It remains bound to the aminoacyl-tRNA.EF-Tu.GTP complex up to the GTP hydrolysis stage on the ribosome. This chain is Elongation factor Ts, found in Synechococcus sp. (strain JA-2-3B'a(2-13)) (Cyanobacteria bacterium Yellowstone B-Prime).